A 184-amino-acid chain; its full sequence is Mitochondrial import inner membrane translocase subunit Tim22 (184 aa).

Disulfide bonds link Cys-59/Cys-131 and Cys-150/Cys-169. The next 3 helical transmembrane spans lie at 64 to 84 (ALACVGGFVLGGAFGVFTAGI), 115 to 133 (YAKNFAIVGAMFSCTECLV), and 160 to 180 (AGLKAGVLGCGGFAAFSAVID).

Belongs to the Tim17/Tim22/Tim23 family. Core component of the TIM22 complex.

The protein localises to the mitochondrion inner membrane. In terms of biological role, essential core component of the TIM22 complex, a complex that mediates the import and insertion of multi-pass transmembrane proteins into the mitochondrial inner membrane. In the TIM22 complex, it constitutes the voltage-activated and signal-gated channel. Forms a twin-pore translocase that uses the membrane potential as external driving force in 2 voltage-dependent steps. This Xenopus laevis (African clawed frog) protein is Mitochondrial import inner membrane translocase subunit Tim22 (timm22).